The following is a 224-amino-acid chain: Metalloproteinase inhibitor 4 (224 aa).

A signal peptide spans 1–29 (MPWSPLAALSWALVLRLLALLWPPGRGEA). Cys-30 contributes to the Zn(2+) binding site. Involved in metalloproteinase-binding regions lie at residues 30–33 (CSCA) and 99–100 (SS). Disulfide bonds link Cys-30–Cys-102, Cys-32–Cys-131, Cys-42–Cys-156, Cys-158–Cys-205, Cys-163–Cys-168, and Cys-176–Cys-197. The NTR domain occupies 30–156 (CSCAPAHPQQ…SLNHHYHQNC (127 aa)).

The protein belongs to the protease inhibitor I35 (TIMP) family. In terms of tissue distribution, expressed in retina, smooth muscle, skin, pancreas, skeletal muscle, heart, brain, lung, kidney and testis. Not found in cartilage, spleen and liver.

The protein resides in the secreted. Functionally, complexes with metalloproteinases (such as collagenases) and irreversibly inactivates them by binding to their catalytic zinc cofactor. The protein is Metalloproteinase inhibitor 4 (Timp4) of Rattus norvegicus (Rat).